The following is a 499-amino-acid chain: Probable cytosol aminopeptidase (499 aa).

Mn(2+) is bound by residues Lys263 and Asp268. Lys275 is an active-site residue. The Mn(2+) site is built by Asp286, Asp345, and Glu347. Residue Arg349 is part of the active site.

This sequence belongs to the peptidase M17 family. Mn(2+) serves as cofactor.

It is found in the cytoplasm. It carries out the reaction Release of an N-terminal amino acid, Xaa-|-Yaa-, in which Xaa is preferably Leu, but may be other amino acids including Pro although not Arg or Lys, and Yaa may be Pro. Amino acid amides and methyl esters are also readily hydrolyzed, but rates on arylamides are exceedingly low.. The catalysed reaction is Release of an N-terminal amino acid, preferentially leucine, but not glutamic or aspartic acids.. Presumably involved in the processing and regular turnover of intracellular proteins. Catalyzes the removal of unsubstituted N-terminal amino acids from various peptides. The protein is Probable cytosol aminopeptidase (pepA) of Chlamydia muridarum (strain MoPn / Nigg).